The sequence spans 712 residues: Polyribonucleotide nucleotidyltransferase (712 aa).

Mg(2+) is bound by residues Asp-485 and Asp-491. The region spanning 552–611 is the KH domain; that stretch reads PKITTISVPKEKIRDVIGQGGKVIREIVEYSGAKIDINDDGTIMIAASSEDQATRAIERI. An S1 motif domain is found at 621-689; sequence GAIYTGKVVK…DRGKVKLSMR (69 aa).

Belongs to the polyribonucleotide nucleotidyltransferase family. The cofactor is Mg(2+).

It is found in the cytoplasm. The catalysed reaction is RNA(n+1) + phosphate = RNA(n) + a ribonucleoside 5'-diphosphate. Its function is as follows. Involved in mRNA degradation. Catalyzes the phosphorolysis of single-stranded polyribonucleotides processively in the 3'- to 5'-direction. The chain is Polyribonucleotide nucleotidyltransferase from Gluconacetobacter diazotrophicus (strain ATCC 49037 / DSM 5601 / CCUG 37298 / CIP 103539 / LMG 7603 / PAl5).